Reading from the N-terminus, the 209-residue chain is Glycerol-3-phosphate acyltransferase (209 aa).

The next 5 helical transmembrane spans lie at 4–24 (IAIG…AILI), 53–75 (LAAA…IGYG), 80–102 (PFWL…FFHF), 112–132 (LGAI…TWLL), and 138–158 (GYSS…VWWF).

It belongs to the PlsY family. Probably interacts with PlsX.

It is found in the cell inner membrane. The catalysed reaction is an acyl phosphate + sn-glycerol 3-phosphate = a 1-acyl-sn-glycero-3-phosphate + phosphate. It participates in lipid metabolism; phospholipid metabolism. Its function is as follows. Catalyzes the transfer of an acyl group from acyl-phosphate (acyl-PO(4)) to glycerol-3-phosphate (G3P) to form lysophosphatidic acid (LPA). This enzyme utilizes acyl-phosphate as fatty acyl donor, but not acyl-CoA or acyl-ACP. The protein is Glycerol-3-phosphate acyltransferase of Sodalis glossinidius (strain morsitans).